A 696-amino-acid polypeptide reads, in one-letter code: Polyribonucleotide nucleotidyltransferase (696 aa).

Positions 483 and 489 each coordinate Mg(2+). The KH domain occupies P550–I609. The region spanning G619–K687 is the S1 motif domain.

Belongs to the polyribonucleotide nucleotidyltransferase family. Requires Mg(2+) as cofactor.

The protein resides in the cytoplasm. The enzyme catalyses RNA(n+1) + phosphate = RNA(n) + a ribonucleoside 5'-diphosphate. Its function is as follows. Involved in mRNA degradation. Catalyzes the phosphorolysis of single-stranded polyribonucleotides processively in the 3'- to 5'-direction. In Geobacter sp. (strain M21), this protein is Polyribonucleotide nucleotidyltransferase.